The following is a 445-amino-acid chain: Potassium/proton antiporter CemA (445 aa).

The next 4 helical transmembrane spans lie at M44–C64, A330–L350, L368–L388, and F405–I425.

The protein belongs to the CemA family.

It is found in the plastid. The protein localises to the chloroplast inner membrane. It carries out the reaction K(+)(in) + H(+)(out) = K(+)(out) + H(+)(in). Functionally, contributes to K(+)/H(+) antiport activity by supporting proton efflux to control proton extrusion and homeostasis in chloroplasts in a light-dependent manner to modulate photosynthesis. Prevents excessive induction of non-photochemical quenching (NPQ) under continuous-light conditions. Indirectly promotes efficient inorganic carbon uptake into chloroplasts. This chain is Potassium/proton antiporter CemA, found in Pleurastrum terricola (Filamentous green alga).